We begin with the raw amino-acid sequence, 174 residues long: Calcineurin subunit B (174 aa).

4 consecutive EF-hand domains span residues Glu21–Pro56, Arg60–Lys88, Ser90–Lys125, and Glu131–Ala166. Ca(2+) is bound by residues Asp34, Asp36, Ser38, Thr40, Glu45, Asp66, Asp68, Asn70, Thr72, Glu77, Asp103, Asp105, Asp107, Tyr109, Glu114, Asp144, Asp146, Asp148, Arg150, and Glu155.

This sequence belongs to the calcineurin regulatory subunit family. In terms of assembly, composed of a catalytic subunit (A) and a regulatory subunit (B).

Functionally, regulatory subunit of calcineurin, a calcium-dependent, calmodulin stimulated protein phosphatase. Confers calcium sensitivity. The polypeptide is Calcineurin subunit B (CNB1) (Debaryomyces hansenii (strain ATCC 36239 / CBS 767 / BCRC 21394 / JCM 1990 / NBRC 0083 / IGC 2968) (Yeast)).